The primary structure comprises 596 residues: Probable translation initiation factor IF-2 (596 aa).

Residues 3-220 form the tr-type G domain; that stretch reads IRSPIVSVLG…MLLGLAQEYL (218 aa). Residues 12-19 form a G1 region; the sequence is GHVDHGKT. Residue 12–19 coordinates GTP; that stretch reads GHVDHGKT. The G2 stretch occupies residues 37–41; sequence GITQH. Residues 76–79 form a G3 region; the sequence is DTPG. Residues 76-80 and 130-133 contribute to the GTP site; these read DTPGH and NKID. The tract at residues 130-133 is G4; it reads NKID. Residues 198–200 form a G5 region; that stretch reads SAK.

Belongs to the TRAFAC class translation factor GTPase superfamily. Classic translation factor GTPase family. IF-2 subfamily.

In terms of biological role, function in general translation initiation by promoting the binding of the formylmethionine-tRNA to ribosomes. Seems to function along with eIF-2. This Methanobrevibacter smithii (strain ATCC 35061 / DSM 861 / OCM 144 / PS) protein is Probable translation initiation factor IF-2.